A 1113-amino-acid chain; its full sequence is Atrial natriuretic peptide-converting enzyme (1113 aa).

Residues 1 to 112 lie on the Cytoplasmic side of the membrane; sequence MGRVSFSVRV…QKLVTANLLR (112 aa). A helical; Signal-anchor for type II membrane protein transmembrane segment spans residues 113 to 133; it reads FLLLVLIPCICALIVLLAILL. Residues 134-1113 are Extracellular-facing; that stretch reads SFVGTLKRVY…QTFLQKKSQG (980 aa). N-linked (GlcNAc...) asparagine glycans are attached at residues Asn147, Asn202, and Asn208. The disordered stretch occupies residues 176–202; that stretch reads APSLPPSQSTPAWTPRAPSPEDQSHRN. Positions 201-327 constitute an FZ 1 domain; that stretch reads RNTSTCMNIT…SSVRKSCFSL (127 aa). Cystine bridges form between Cys206–Cys266, Cys214–Cys259, Cys250–Cys290, Cys279–Cys324, Cys283–Cys307, Cys337–Cys350, Cys345–Cys363, and Cys357–Cys372. Asn298 and Asn317 each carry an N-linked (GlcNAc...) asparagine glycan. LDL-receptor class A domains are found at residues 336–372, 373–408, 409–445, and 446–483; these read LCGGGESFLCTSGLCVPKKLQCNGYNDCDDWSDEAHC, NCSKDLFHCGTGKCLHYSLLCDGYDDCGDLSDEQNC, DCNLTKEHRCGDGRCIAAEWVCDGDHDCVDKSDEVNC, and SCHSQGLVECRSGQCIPSTFQCDGDEDCKDGSDEENCS. The N-linked (GlcNAc...) asparagine glycan is linked to Asn373. Disulfide bonds link Cys374/Cys386, Cys381/Cys399, Cys393/Cys408, Cys410/Cys423, Cys418/Cys436, Cys430/Cys445, Cys447/Cys460, Cys455/Cys473, and Cys467/Cys482. The N-linked (GlcNAc...) asparagine glycan is linked to Asn411. N-linked (GlcNAc...) asparagine glycosylation occurs at Asn444. N-linked (GlcNAc...) asparagine glycans are attached at residues Asn481, Asn519, and Asn537. Residues 518 to 641 form the FZ 2 domain; that stretch reads SNCSQCEPIT…SSDNQTCLLP (124 aa). 14 disulfides stabilise this stretch: Cys523–Cys586, Cys531–Cys579, Cys570–Cys608, Cys597–Cys638, Cys601–Cys625, Cys648–Cys660, Cys655–Cys673, Cys667–Cys682, Cys684–Cys698, Cys692–Cys711, Cys705–Cys720, Cys723–Cys735, Cys730–Cys748, and Cys742–Cys757. Residue Asn635 is glycosylated (N-linked (GlcNAc...) asparagine). LDL-receptor class A domains lie at 647-682, 683-721, and 722-757; these read ECSPSHFKCRSGRCVLGSRRCDGQADCDDDSDEENC, GCKERALWECPFNKQCLKHTLICDGFPDCPDSMDEKNCS, and FCQDNELECANHECVPRDLWCDGWVDCSDSSDEWGC. Asn719 carries an N-linked (GlcNAc...) asparagine glycan. The SRCR domain maps to 758-853; that stretch reads VTLSKNGNSS…SRSEISLLCS (96 aa). 2 N-linked (GlcNAc...) asparagine glycosylation sites follow: Asn765 and Asn828. Intrachain disulfides connect Cys782-Cys884, Cys857-Cys979, Cys895-Cys911, Cys993-Cys1058, Cys1022-Cys1037, and Cys1048-Cys1077. One can recognise a Peptidase S1 domain in the interval 869-1102; the sequence is ILGGRTSRPG…FVGWIERQIY (234 aa). Catalysis depends on charge relay system residues His910 and Asp959. Asn970 carries N-linked (GlcNAc...) asparagine glycosylation. The Charge relay system role is filled by Ser1052. Asn1089 carries N-linked (GlcNAc...) asparagine glycosylation.

It belongs to the peptidase S1 family. N-glycosylated; required for processing and activation. In terms of processing, activated through proteolytic processing by a trypsin-like protease; cleaved into a N-terminal propeptide and an activated corin protease fragment. Atrial natriuretic peptide-converting enzyme, 180 kDa soluble fragment is produced by cleavage by ADAM10. Cleavage by ADAM10 to produce soluble 180 kDa soluble fragment takes place after the transmembrane region and before FZ 1. Post-translationally, a disulfide bond links the activated corin protease fragment and the N-terminal propeptide. The disulfide bond also links the activated corin protease fragment with Atrial natriuretic peptide-converting enzyme, 180 kDa soluble fragment. As to expression, highly expressed in heart. Also expressed in pregnant uterus.

Its subcellular location is the cell membrane. The protein localises to the secreted. In terms of biological role, serine-type endopeptidase involved in atrial natriuretic peptide (NPPA) processing. Converts through proteolytic cleavage the non-functional propeptide NPPA into the active hormone, thereby regulating blood pressure in heart and promoting natriuresis, diuresis and vasodilation. Proteolytic cleavage of pro-NPPA also plays a role in female pregnancy by promoting trophoblast invasion and spiral artery remodeling in uterus. Also acts as a regulator of sodium reabsorption in kidney. May also process pro-NPPB the B-type natriuretic peptide. This Mus musculus (Mouse) protein is Atrial natriuretic peptide-converting enzyme (Corin).